A 286-amino-acid chain; its full sequence is Phycobilisome 32.1 kDa linker polypeptide, phycocyanin-associated, rod (286 aa).

The PBS-linker domain occupies 2–180; that stretch reads AITAAASRLG…LYRGYANSDR (179 aa). Residues 234–286 enclose the CpcD-like domain; the sequence is DRVYRIEVTGVRSPGYPSVRRSSYAIIVPYERLSEKIQQIHKLGGKIVSITSA.

The protein belongs to the phycobilisome linker protein family.

Its subcellular location is the cellular thylakoid membrane. Rod linker protein, associated with phycocyanin. Linker polypeptides determine the state of aggregation and the location of the disk-shaped phycobiliprotein units within the phycobilisome and modulate their spectroscopic properties in order to mediate a directed and optimal energy transfer. This Mastigocladus laminosus (Fischerella sp.) protein is Phycobilisome 32.1 kDa linker polypeptide, phycocyanin-associated, rod (cpcC).